Reading from the N-terminus, the 302-residue chain is MDQQRFTHLLQLEAESIHIIREVAAEFSNPVMMYSIGKDSSVMLHLARKAFHPGKLPFPLLHVDTGWKFREMYAFRDHTAKAYGFELLVHKNPEGVAMGINPFVHGSAKHTDIMKNEGLKQALNQYGFDAAFGGARRDEEKSRAKERIYSFRDRFHRWDPKNQRPELWHNYNGQINKGESIRVFPLSNWTELDIWQYIFLENIEIVPLYLAKKRPVLERDGMLIMVDDDRIDLQPGEVIEQRMVRFRTLGCWPLTGAVASDAQTLPEIIEEMLVSTTSERQGRVIDRDQSGSMEMKKRQGYF.

Belongs to the PAPS reductase family. CysD subfamily. In terms of assembly, heterodimer composed of CysD, the smaller subunit, and CysN.

The catalysed reaction is sulfate + ATP + H(+) = adenosine 5'-phosphosulfate + diphosphate. The protein operates within sulfur metabolism; hydrogen sulfide biosynthesis; sulfite from sulfate: step 1/3. In terms of biological role, with CysN forms the ATP sulfurylase (ATPS) that catalyzes the adenylation of sulfate producing adenosine 5'-phosphosulfate (APS) and diphosphate, the first enzymatic step in sulfur assimilation pathway. APS synthesis involves the formation of a high-energy phosphoric-sulfuric acid anhydride bond driven by GTP hydrolysis by CysN coupled to ATP hydrolysis by CysD. The sequence is that of Sulfate adenylyltransferase subunit 2 from Sodalis glossinidius (strain morsitans).